We begin with the raw amino-acid sequence, 372 residues long: Cytoplasmic tRNA 2-thiolation protein 1 (372 aa).

Positions 335–372 are disordered; sequence GKKEDGGCGSGGGGCGCAGAADETENEETRKRLKDLQF. Residues 341 to 351 show a composition bias toward gly residues; sequence GCGSGGGGCGC. Basic and acidic residues predominate over residues 361 to 372; sequence EETRKRLKDLQF.

This sequence belongs to the TtcA family. CTU1/NCS6/ATPBD3 subfamily.

It is found in the cytoplasm. The protein operates within tRNA modification; 5-methoxycarbonylmethyl-2-thiouridine-tRNA biosynthesis. In terms of biological role, plays a central role in 2-thiolation of mcm(5)S(2)U at tRNA wobble positions of tRNA(Lys), tRNA(Glu) and tRNA(Gln). Directly binds tRNAs and probably acts by catalyzing adenylation of tRNAs, an intermediate required for 2-thiolation. It is unclear whether it acts as a sulfurtransferase that transfers sulfur from thiocarboxylated URM1 onto the uridine of tRNAs at wobble position. The chain is Cytoplasmic tRNA 2-thiolation protein 1 from Caenorhabditis briggsae.